Here is a 318-residue protein sequence, read N- to C-terminus: Lysophospholipase D GDPD3 (318 aa).

The Cytoplasmic portion of the chain corresponds to 1 to 2 (MS). A helical transmembrane segment spans residues 3–23 (LLLYYALPALGSYAMLSIFFL). The Extracellular portion of the chain corresponds to 24-198 (RRPHLLHTPR…KAANPEMPLS (175 aa)). Positions 39 to 308 (IRLGAHRGGS…DYPTALRHYL (270 aa)) constitute a GP-PDE domain. Positions 71, 73, and 86 each coordinate a divalent metal cation. Residues 199–221 (FTISRGFWVLLSYYLGLLPFIPI) form a helical membrane-spanning segment. Residues 222–318 (PEKFFFCFLP…DNHGPAARTS (97 aa)) lie on the Cytoplasmic side of the membrane.

It belongs to the glycerophosphoryl diester phosphodiesterase family. As to expression, widely expressed, with high level in kidney and ovary.

Its subcellular location is the membrane. The protein localises to the cytoplasm. The protein resides in the perinuclear region. It is found in the endoplasmic reticulum. It carries out the reaction 1-hexadecanoyl-sn-glycero-3-phosphocholine + H2O = 1-hexadecanoyl-sn-glycero-3-phosphate + choline + H(+). The catalysed reaction is 1-hexadecanoyl-sn-glycero-3-phosphocholine + H2O = sn-glycerol 3-phosphocholine + hexadecanoate + H(+). The enzyme catalyses 1-O-(1Z-octadecenyl)-sn-glycero-3-phospho-N-hexadecanoyl-ethanolamine + H2O = 1-O-(1Z-octadecenyl)-sn-glycero-3-phosphate + N-hexadecanoylethanolamine + H(+). It catalyses the reaction N-(5Z,8Z,11Z,14Z-eicosatetraenoyl)-1-(9Z-octadecenoyl)-sn-glycero-3-phosphoethanolamine + H2O = N-(5Z,8Z,11Z,14Z-eicosatetraenoyl)-ethanolamine + 1-(9Z-octadecenoyl)-sn-glycero-3-phosphate + H(+). It carries out the reaction N,1-di-(9Z-octadecenoyl)-sn-glycero-3-phosphoethanolamine + H2O = N-(9Z-octadecenoyl) ethanolamine + 1-(9Z-octadecenoyl)-sn-glycero-3-phosphate + H(+). The catalysed reaction is N-hexadecanoyl-1-(9Z-octadecenoyl)-sn-glycero-3-phosphoethanolamine + H2O = N-hexadecanoylethanolamine + 1-(9Z-octadecenoyl)-sn-glycero-3-phosphate + H(+). The enzyme catalyses 1-O-hexadecyl-sn-glycero-3-phosphocholine + H2O = 1-O-hexadecyl-sn-glycero-3-phosphate + choline + H(+). Lysophospholipase D activity is stimulated by calcium. Loss of lysophospholipase D activity in presence of EDTA. In terms of biological role, hydrolyzes lysoglycerophospholipids to produce lysophosphatidic acid (LPA) and the corresponding amines. Shows a preference for 1-O-alkyl-sn-glycero-3-phosphocholine (lyso-PAF), lysophosphatidylcholine (lyso-PC) and N-acylethanolamine lysophospholipids. Does not display glycerophosphodiester phosphodiesterase activity, since it cannot hydrolyze either glycerophosphoinositol or glycerophosphocholine. The polypeptide is Lysophospholipase D GDPD3 (Homo sapiens (Human)).